The primary structure comprises 347 residues: NADH-ubiquinone oxidoreductase chain 2 (347 aa).

10 helical membrane passes run 13 to 33, 56 to 76, 96 to 116, 123 to 143, 149 to 169, 178 to 198, 201 to 221, 247 to 267, 274 to 294, and 326 to 346; these read IFAG…WVGL, AIKY…AILF, LMIM…FWVP, PLTS…SIMY, LNVS…SWGG, ILAY…PYNP, TILN…LLNL, TLLS…WAII, NSLI…YFYL, and LPTL…MLMI.

Belongs to the complex I subunit 2 family. As to quaternary structure, core subunit of respiratory chain NADH dehydrogenase (Complex I) which is composed of 45 different subunits. Interacts with TMEM242.

Its subcellular location is the mitochondrion inner membrane. It catalyses the reaction a ubiquinone + NADH + 5 H(+)(in) = a ubiquinol + NAD(+) + 4 H(+)(out). Core subunit of the mitochondrial membrane respiratory chain NADH dehydrogenase (Complex I) which catalyzes electron transfer from NADH through the respiratory chain, using ubiquinone as an electron acceptor. Essential for the catalytic activity and assembly of complex I. This Homo sapiens (Human) protein is NADH-ubiquinone oxidoreductase chain 2.